A 112-amino-acid chain; its full sequence is Small ribosomal subunit protein bS6 (112 aa).

This sequence belongs to the bacterial ribosomal protein bS6 family.

Its function is as follows. Binds together with bS18 to 16S ribosomal RNA. This chain is Small ribosomal subunit protein bS6, found in Legionella pneumophila (strain Paris).